The following is a 349-amino-acid chain: 6-phosphogluconolactonase (349 aa).

Residues leucine 125–alanine 151 are disordered. The segment covering glycine 138–histidine 147 has biased composition (basic and acidic residues).

The protein belongs to the cycloisomerase 2 family.

It carries out the reaction 6-phospho-D-glucono-1,5-lactone + H2O = 6-phospho-D-gluconate + H(+). The protein operates within carbohydrate degradation; pentose phosphate pathway; D-ribulose 5-phosphate from D-glucose 6-phosphate (oxidative stage): step 2/3. Functionally, catalyzes the hydrolysis of 6-phosphogluconolactone to 6-phosphogluconate. The chain is 6-phosphogluconolactonase (pgl) from Bacillus subtilis (strain 168).